A 262-amino-acid polypeptide reads, in one-letter code: Lectin (262 aa).

The first 21 residues, 1–21, serve as a signal peptide directing secretion; that stretch reads MASSVLLVLSLFLVLLLTQAS. Residues N53, N82, N100, N129, and N205 are each glycosylated (N-linked (GlcNAc...) asparagine).

It belongs to the leguminous lectin family.

This metalloglycoprotein, containing Ca(2+), Mn(2+), binds glycoconjugates containing terminal non-reducing alpha-D-GalNAc residues. This is Lectin from Phaseolus lunatus (Lima bean).